A 390-amino-acid chain; its full sequence is Glutamate 5-kinase (390 aa).

K29 provides a ligand contact to ATP. The substrate site is built by S69, D156, and N168. 188–189 (TD) serves as a coordination point for ATP. Residues 295–374 (SGSLIVDAGA…EQFDRILGNN (80 aa)) form the PUA domain.

It belongs to the glutamate 5-kinase family.

Its subcellular location is the cytoplasm. It carries out the reaction L-glutamate + ATP = L-glutamyl 5-phosphate + ADP. It functions in the pathway amino-acid biosynthesis; L-proline biosynthesis; L-glutamate 5-semialdehyde from L-glutamate: step 1/2. Its function is as follows. Catalyzes the transfer of a phosphate group to glutamate to form L-glutamate 5-phosphate. This chain is Glutamate 5-kinase, found in Psychrobacter cryohalolentis (strain ATCC BAA-1226 / DSM 17306 / VKM B-2378 / K5).